The primary structure comprises 277 residues: MVTTSPPPTLTNSVQPHPTTTTTTTLLPVTNLIPIILVSVFIALLLIFLLSRTSKKQPDPYLGVMSAISKHIRKKKAIALVFYIDTTDQRIKIYPVFQKVGNVLIYLNENGETNFSVIDPKTKPLQIKVGNISYPVYFAIAGNTIKYLAKFEDLETGVKYDNISIDDPRLIEILSKITGDVTSTYYITPTKKLTILASPEAIASVTIKRLWSPIENSIITIKEINENLTKLMEISARVLGLRLNTRLTLILMLIAVFLIFMVLIGTGIVHFPPPPTK.

Positions 1–20 are disordered; that stretch reads MVTTSPPPTLTNSVQPHPTT.

This is an uncharacterized protein from Acidianus convivator (ATV).